The primary structure comprises 126 residues: Holo-[acyl-carrier-protein] synthase (126 aa).

D9 and E58 together coordinate Mg(2+).

This sequence belongs to the P-Pant transferase superfamily. AcpS family. Mg(2+) serves as cofactor.

It localises to the cytoplasm. The catalysed reaction is apo-[ACP] + CoA = holo-[ACP] + adenosine 3',5'-bisphosphate + H(+). Functionally, transfers the 4'-phosphopantetheine moiety from coenzyme A to a Ser of acyl-carrier-protein. This is Holo-[acyl-carrier-protein] synthase from Escherichia coli (strain ATCC 8739 / DSM 1576 / NBRC 3972 / NCIMB 8545 / WDCM 00012 / Crooks).